An 873-amino-acid polypeptide reads, in one-letter code: Alanine--tRNA ligase (873 aa).

Zn(2+) contacts are provided by His562, His566, Cys664, and His668.

It belongs to the class-II aminoacyl-tRNA synthetase family. Zn(2+) serves as cofactor.

The protein resides in the cytoplasm. It catalyses the reaction tRNA(Ala) + L-alanine + ATP = L-alanyl-tRNA(Ala) + AMP + diphosphate. Its function is as follows. Catalyzes the attachment of alanine to tRNA(Ala) in a two-step reaction: alanine is first activated by ATP to form Ala-AMP and then transferred to the acceptor end of tRNA(Ala). Also edits incorrectly charged Ser-tRNA(Ala) and Gly-tRNA(Ala) via its editing domain. The chain is Alanine--tRNA ligase from Shewanella amazonensis (strain ATCC BAA-1098 / SB2B).